The following is a 466-amino-acid chain: Mitochondrial-processing peptidase subunit beta (466 aa).

A Zn(2+)-binding site is contributed by His73. The active-site Proton acceptor is the Glu76. Zn(2+)-binding residues include His77 and Glu153.

Belongs to the peptidase M16 family. As to quaternary structure, heterodimer of mppA (alpha) and mppB (beta) subunits, forming the mitochondrial processing protease (MPP) in which mppA is involved in substrate recognition and binding and mppB is the catalytic subunit. Zn(2+) is required as a cofactor.

It localises to the mitochondrion matrix. It carries out the reaction Release of N-terminal transit peptides from precursor proteins imported into the mitochondrion, typically with Arg in position P2.. Binding to mppA is required for catalytic activity. In terms of biological role, catalytic subunit of the essential mitochondrial processing protease (MPP), which cleaves the mitochondrial sequence off newly imported precursors proteins. Preferentially, cleaves after an arginine at position P2. This is Mitochondrial-processing peptidase subunit beta (mppB) from Lentinula edodes (Shiitake mushroom).